The primary structure comprises 612 residues: Dihydroxy-acid dehydratase (612 aa).

D81 is a binding site for Mg(2+). [2Fe-2S] cluster is bound at residue C122. D123 and K124 together coordinate Mg(2+). Position 124 is an N6-carboxylysine (K124). C193 lines the [2Fe-2S] cluster pocket. E489 serves as a coordination point for Mg(2+). The active-site Proton acceptor is the S515.

It belongs to the IlvD/Edd family. In terms of assembly, homodimer. The cofactor is [2Fe-2S] cluster. Requires Mg(2+) as cofactor.

The enzyme catalyses (2R)-2,3-dihydroxy-3-methylbutanoate = 3-methyl-2-oxobutanoate + H2O. It catalyses the reaction (2R,3R)-2,3-dihydroxy-3-methylpentanoate = (S)-3-methyl-2-oxopentanoate + H2O. The protein operates within amino-acid biosynthesis; L-isoleucine biosynthesis; L-isoleucine from 2-oxobutanoate: step 3/4. Its pathway is amino-acid biosynthesis; L-valine biosynthesis; L-valine from pyruvate: step 3/4. Functionally, functions in the biosynthesis of branched-chain amino acids. Catalyzes the dehydration of (2R,3R)-2,3-dihydroxy-3-methylpentanoate (2,3-dihydroxy-3-methylvalerate) into 2-oxo-3-methylpentanoate (2-oxo-3-methylvalerate) and of (2R)-2,3-dihydroxy-3-methylbutanoate (2,3-dihydroxyisovalerate) into 2-oxo-3-methylbutanoate (2-oxoisovalerate), the penultimate precursor to L-isoleucine and L-valine, respectively. In Ectopseudomonas mendocina (strain ymp) (Pseudomonas mendocina), this protein is Dihydroxy-acid dehydratase.